We begin with the raw amino-acid sequence, 681 residues long: GAS2-like protein 1 (681 aa).

The residue at position 2 (Ala2) is an N-acetylalanine. The Calponin-homology (CH) domain maps to 27–148; that stretch reads EAMKEDLAEW…CLLEVARRGA (122 aa). 3 disordered regions span residues 168–204, 278–509, and 536–681; these read LRAAPPAPNAPAAGEDTTETAPAPGTPARGPRMTPSD, STAH…PLQL, and ASVT…DSWM. The span at 186-199 shows a compositional bias: low complexity; it reads ETAPAPGTPARGPR. Residue Thr193 is modified to Phosphothreonine. In terms of domain architecture, GAR spans 203 to 275; that stretch reads SDLRNLDELV…HYLDKHDPCR (73 aa). Over residues 291–303 the composition is skewed to polar residues; sequence FSPQRVSPTTSPR. Residues Ser306 and Ser316 each carry the phosphoserine modification. Residues 327-342 show a composition bias toward basic and acidic residues; that stretch reads STKEGPETPPRPRDQL. Thr334 carries the post-translational modification Phosphothreonine. Phosphoserine occurs at positions 352 and 355. Low complexity predominate over residues 354 to 365; it reads DSDSSASSAQSG. Basic and acidic residues predominate over residues 370 to 381; that stretch reads RSDDTGTGPRRE. The residue at position 391 (Thr391) is a Phosphothreonine. At Ser394 the chain carries Phosphoserine. A compositionally biased stretch (basic and acidic residues) spans 404-413; sequence QSRDRLDRGR. Ser436, Ser438, Ser479, and Ser486 each carry phosphoserine. Residues 437 to 454 are compositionally biased toward basic and acidic residues; the sequence is QSREEQAVLLVRRDRDGQ. A compositionally biased stretch (low complexity) spans 475 to 493; it reads PRARSPAAPRLSRVSSPSP. Residue Arg487 is modified to Omega-N-methylarginine. Phosphoserine is present on residues Ser490 and Ser492. Thr498 is modified (phosphothreonine). Arg504 carries the post-translational modification Omega-N-methylarginine. A compositionally biased stretch (pro residues) spans 542–556; that stretch reads GPVPDPARAPDPPAP. Residues 557–571 show a composition bias toward low complexity; the sequence is DSAYCSSSSSSSSLS. Arg633 bears the Omega-N-methylarginine mark. Residues 634-644 are compositionally biased toward basic and acidic residues; sequence GRMDTQPDRKP. Position 657 is a phosphoserine (Ser657).

This sequence belongs to the GAS2 family. In terms of assembly, interacts with MAPRE1.

The protein resides in the cytoplasm. Its subcellular location is the cytoskeleton. It localises to the stress fiber. Its function is as follows. Involved in the cross-linking of microtubules and microfilaments. Regulates microtubule dynamics and stability by interacting with microtubule plus-end tracking proteins, such as MAPRE1, to regulate microtubule growth along actin stress fibers. The sequence is that of GAS2-like protein 1 (GAS2L1) from Homo sapiens (Human).